We begin with the raw amino-acid sequence, 136 residues long: Protein PsiE (136 aa).

4 helical membrane passes run 15 to 35 (ILQN…VLFL), 55 to 75 (YELV…ALIV), 82 to 102 (FHFP…RLII), and 108 to 128 (PMDV…LWLC).

It belongs to the PsiE family.

The protein resides in the cell inner membrane. In Salmonella arizonae (strain ATCC BAA-731 / CDC346-86 / RSK2980), this protein is Protein PsiE.